The sequence spans 405 residues: Eukaryotic initiation factor 4A (405 aa).

Residues 31–59 carry the Q motif motif; sequence ECFEALNLEGDLLRGIFAYGFEKPSAIQQ. The Helicase ATP-binding domain maps to 62–232; sequence IKPILDGYDT…TQFMRDPKRI (171 aa). 75–82 provides a ligand contact to ATP; that stretch reads AQSGTGKT. The DEAD box motif lies at 180 to 183; it reads DEAD. The Helicase C-terminal domain maps to 243-404; the sequence is GIRQFYVGVE…EMPMGITDIL (162 aa).

This sequence belongs to the DEAD box helicase family. eIF4A subfamily. EIF4F is a multi-subunit complex, the composition of which varies with external and internal environmental conditions. It is composed of at least EIF4A, EIF4E and EIF4G.

The catalysed reaction is ATP + H2O = ADP + phosphate + H(+). Its function is as follows. ATP-dependent RNA helicase which is a subunit of the eIF4F complex involved in cap recognition and is required for mRNA binding to ribosome. In the current model of translation initiation, eIF4A unwinds RNA secondary structures in the 5'-UTR of mRNAs which is necessary to allow efficient binding of the small ribosomal subunit, and subsequent scanning for the initiator codon. This is Eukaryotic initiation factor 4A (EIF4-A) from Cryptosporidium parvum.